The sequence spans 194 residues: GTP cyclohydrolase-2 (194 aa).

50–54 contributes to the GTP binding site; it reads RIHSE. Zn(2+) is bound by residues C55, C66, and C68. Residues 94–96 and T116 contribute to the GTP site; that span reads EGR. D128 acts as the Proton acceptor in catalysis. R130 serves as the catalytic Nucleophile. Residues T151 and K156 each contribute to the GTP site.

This sequence belongs to the GTP cyclohydrolase II family. Zn(2+) serves as cofactor.

The catalysed reaction is GTP + 4 H2O = 2,5-diamino-6-hydroxy-4-(5-phosphoribosylamino)-pyrimidine + formate + 2 phosphate + 3 H(+). It functions in the pathway cofactor biosynthesis; riboflavin biosynthesis; 5-amino-6-(D-ribitylamino)uracil from GTP: step 1/4. Functionally, catalyzes the conversion of GTP to 2,5-diamino-6-ribosylamino-4(3H)-pyrimidinone 5'-phosphate (DARP), formate and pyrophosphate. This chain is GTP cyclohydrolase-2, found in Helicobacter hepaticus (strain ATCC 51449 / 3B1).